The sequence spans 587 residues: Lipoprotein LpqB (587 aa).

Positions 1–19 (MERLMRLTILLFLGAVLAG) are cleaved as a signal peptide. Cys20 carries N-palmitoyl cysteine lipidation. Cys20 is lipidated: S-diacylglycerol cysteine.

The protein belongs to the LpqB lipoprotein family.

The protein resides in the cell membrane. The sequence is that of Lipoprotein LpqB from Mycobacterium bovis (strain ATCC BAA-935 / AF2122/97).